The primary structure comprises 108 residues: Phosphoribosyl-AMP cyclohydrolase (108 aa).

Aspartate 73 is a Mg(2+) binding site. Cysteine 74 is a binding site for Zn(2+). Mg(2+) is bound by residues aspartate 75 and aspartate 77. Zn(2+) contacts are provided by cysteine 90 and cysteine 97.

The protein belongs to the PRA-CH family. As to quaternary structure, homodimer. It depends on Mg(2+) as a cofactor. Zn(2+) serves as cofactor.

The protein resides in the cytoplasm. It carries out the reaction 1-(5-phospho-beta-D-ribosyl)-5'-AMP + H2O = 1-(5-phospho-beta-D-ribosyl)-5-[(5-phospho-beta-D-ribosylamino)methylideneamino]imidazole-4-carboxamide. It participates in amino-acid biosynthesis; L-histidine biosynthesis; L-histidine from 5-phospho-alpha-D-ribose 1-diphosphate: step 3/9. Catalyzes the hydrolysis of the adenine ring of phosphoribosyl-AMP. The protein is Phosphoribosyl-AMP cyclohydrolase of Lactiplantibacillus plantarum (strain ATCC BAA-793 / NCIMB 8826 / WCFS1) (Lactobacillus plantarum).